The following is a 353-amino-acid chain: Photosystem II protein D1 (353 aa).

N-acetylthreonine is present on T2. Residue T2 is modified to Phosphothreonine. Transmembrane regions (helical) follow at residues 29–46, 118–133, and 142–156; these read YIGW…TATS, HFLL…EWEL, and WIAV…AATA. H118 contacts chlorophyll a. Position 126 (Y126) interacts with pheophytin a. [CaMn4O5] cluster is bound by residues D170 and E189. The helical transmembrane segment at 197-218 threads the bilayer; that stretch reads FHMLGVAGVFGGSLFSAMHGSL. H198 provides a ligand contact to chlorophyll a. Residues H215 and 264–265 each bind a quinone; that span reads SF. Residue H215 coordinates Fe cation. H272 is a binding site for Fe cation. Residues 274–288 traverse the membrane as a helical segment; the sequence is FLAAWPVVGIWFTAL. 4 residues coordinate [CaMn4O5] cluster: H332, E333, D342, and A344. Positions 345-353 are excised as a propeptide; sequence AIEAPATNG.

This sequence belongs to the reaction center PufL/M/PsbA/D family. As to quaternary structure, PSII is composed of 1 copy each of membrane proteins PsbA, PsbB, PsbC, PsbD, PsbE, PsbF, PsbH, PsbI, PsbJ, PsbK, PsbL, PsbM, PsbT, PsbX, PsbY, PsbZ, Psb30/Ycf12, at least 3 peripheral proteins of the oxygen-evolving complex and a large number of cofactors. It forms dimeric complexes. The D1/D2 heterodimer binds P680, chlorophylls that are the primary electron donor of PSII, and subsequent electron acceptors. It shares a non-heme iron and each subunit binds pheophytin, quinone, additional chlorophylls, carotenoids and lipids. D1 provides most of the ligands for the Mn4-Ca-O5 cluster of the oxygen-evolving complex (OEC). There is also a Cl(-1) ion associated with D1 and D2, which is required for oxygen evolution. The PSII complex binds additional chlorophylls, carotenoids and specific lipids. serves as cofactor. Post-translationally, tyr-161 forms a radical intermediate that is referred to as redox-active TyrZ, YZ or Y-Z. In terms of processing, C-terminally processed by CTPA; processing is essential to allow assembly of the oxygen-evolving complex and thus photosynthetic growth.

It localises to the plastid membrane. It catalyses the reaction 2 a plastoquinone + 4 hnu + 2 H2O = 2 a plastoquinol + O2. Photosystem II (PSII) is a light-driven water:plastoquinone oxidoreductase that uses light energy to abstract electrons from H(2)O, generating O(2) and a proton gradient subsequently used for ATP formation. It consists of a core antenna complex that captures photons, and an electron transfer chain that converts photonic excitation into a charge separation. The D1/D2 (PsbA/PsbD) reaction center heterodimer binds P680, the primary electron donor of PSII as well as several subsequent electron acceptors. In Cuscuta exaltata (Tall dodder), this protein is Photosystem II protein D1.